Consider the following 367-residue polypeptide: MTKIGVFIPIGSRGWLISTTSPATMPSFELNKAVVQQAEHYGLDFALSMIKLRGYNGPSEYWVHNLESFTLMAGLAAVTKKIQLFASVAMLTMPPAVVARMAATIDSIAPGRFGINMVTGWQPKEYQQMGLELTPEHFARRYDYASEYVQVMRDLWTKGVSNFKGEFFQMDDCKLSPRPSAHIPVVGAGQSERGMRFVAEYGDYNFIGAGGDMNQTDGARTMVAKVEAAAKQSGRDTGAFLLLMVIADRTDELAFAKWELYKQGTDIEALEWQASQAGQDTVAKEGSTAAALVRQIKNPQPTGMLKLIGSYEKVAAMLDEIALSTPGLKGIMLTFDDFVIGMEQFGQYIQPLMRSRNPNLKRNLDAA.

Residues 50-51 (IK), N116, E125, 141-142 (RY), and S191 contribute to the FMN site.

Belongs to the NtaA/SnaA/DszA monooxygenase family. RutA subfamily.

The enzyme catalyses uracil + FMNH2 + NADH + O2 = (Z)-3-ureidoacrylate + FMN + NAD(+) + H2O + H(+). It carries out the reaction thymine + FMNH2 + NADH + O2 = (Z)-2-methylureidoacrylate + FMN + NAD(+) + H2O + H(+). Its function is as follows. Catalyzes the pyrimidine ring opening between N-3 and C-4 by an unusual flavin hydroperoxide-catalyzed mechanism, adding oxygen atoms in the process to yield ureidoacrylate peracid, that immediately reacts with FMN forming ureidoacrylate and FMN-N(5)-oxide. The FMN-N(5)-oxide reacts spontaneously with NADH to produce FMN. Requires the flavin reductase RutF to regenerate FMN in vivo. In Allorhizobium ampelinum (strain ATCC BAA-846 / DSM 112012 / S4) (Agrobacterium vitis (strain S4)), this protein is Pyrimidine monooxygenase RutA.